The sequence spans 290 residues: MNPIHLDTLLTIIDEGSFENASLALSISPSAVSQRIKALEKSVGRVLVSRTQPAVATEAGEVLVQAARKMALLQAETREQLAERLDEIPLTVAINADSLSTWFPPVFAEVAHWGAVTLTLRVEDEAHTLSLLRRGSVLGAVTREADPVAGCEVLRLGVMRHLPVATPELRARYTVDGQPDWVRMPVLRFGPNDVLQDRDLEGRVDGAVARRRVSVVPSAEGFGEAVRLGLGWGLLPEAQAAPMLAAGDVVQLDEKVVDTPLYWQRWRLESRLLARLTDAVVDAARAGLRT.

In terms of domain architecture, HTH lysR-type spans 1 to 57 (MNPIHLDTLLTIIDEGSFENASLALSISPSAVSQRIKALEKSVGRVLVSRTQPAVAT). The H-T-H motif DNA-binding region spans 18 to 37 (FENASLALSISPSAVSQRIK).

Belongs to the LysR transcriptional regulatory family.

Functionally, positively regulates the expression of the exporter LysE. In Corynebacterium efficiens (strain DSM 44549 / YS-314 / AJ 12310 / JCM 11189 / NBRC 100395), this protein is Lysine export transcriptional regulatory protein LysG (lysG).